The primary structure comprises 155 residues: Crossover junction endodeoxyribonuclease RuvC (155 aa).

Active-site residues include Asp-7, Glu-68, and Asp-140. Residues Asp-7, Glu-68, and Asp-140 each contribute to the Mg(2+) site.

Belongs to the RuvC family. In terms of assembly, homodimer which binds Holliday junction (HJ) DNA. The HJ becomes 2-fold symmetrical on binding to RuvC with unstacked arms; it has a different conformation from HJ DNA in complex with RuvA. In the full resolvosome a probable DNA-RuvA(4)-RuvB(12)-RuvC(2) complex forms which resolves the HJ. Mg(2+) serves as cofactor.

It localises to the cytoplasm. The catalysed reaction is Endonucleolytic cleavage at a junction such as a reciprocal single-stranded crossover between two homologous DNA duplexes (Holliday junction).. Its function is as follows. The RuvA-RuvB-RuvC complex processes Holliday junction (HJ) DNA during genetic recombination and DNA repair. Endonuclease that resolves HJ intermediates. Cleaves cruciform DNA by making single-stranded nicks across the HJ at symmetrical positions within the homologous arms, yielding a 5'-phosphate and a 3'-hydroxyl group; requires a central core of homology in the junction. The consensus cleavage sequence is 5'-(A/T)TT(C/G)-3'. Cleavage occurs on the 3'-side of the TT dinucleotide at the point of strand exchange. HJ branch migration catalyzed by RuvA-RuvB allows RuvC to scan DNA until it finds its consensus sequence, where it cleaves and resolves the cruciform DNA. The polypeptide is Crossover junction endodeoxyribonuclease RuvC (Prochlorococcus marinus (strain SARG / CCMP1375 / SS120)).